The chain runs to 574 residues: Serine/threonine-protein kinase B (574 aa).

One can recognise a Protein kinase domain in the interval Tyr-34–Tyr-301. ATP contacts are provided by residues Leu-40–Thr-48 and Lys-65. Asp-163 (proton acceptor) is an active-site residue. The segment at Gly-319–Asp-407 is disordered. Positions Thr-343–Lys-364 are enriched in polar residues. 2 Pentapeptide repeat domains span residues Gln-454 to Lys-493 and Ala-504 to Gly-543.

The protein belongs to the protein kinase superfamily. Ser/Thr protein kinase family. In terms of processing, autophosphorylated.

The catalysed reaction is L-seryl-[protein] + ATP = O-phospho-L-seryl-[protein] + ADP + H(+). It carries out the reaction L-threonyl-[protein] + ATP = O-phospho-L-threonyl-[protein] + ADP + H(+). Protein kinase required for cell motility, but not for phototaxis. This Synechocystis sp. (strain ATCC 27184 / PCC 6803 / Kazusa) protein is Serine/threonine-protein kinase B (spkB).